Reading from the N-terminus, the 338-residue chain is Anthranilate phosphoribosyltransferase (338 aa).

5-phospho-alpha-D-ribose 1-diphosphate is bound by residues glycine 81, 84 to 85 (GD), threonine 89, 91 to 94 (NIST), 109 to 117 (KHGNRAQSS), and threonine 121. Glycine 81 is an anthranilate binding site. Residue serine 93 coordinates Mg(2+). Asparagine 112 provides a ligand contact to anthranilate. Arginine 167 contributes to the anthranilate binding site. Mg(2+)-binding residues include aspartate 225 and glutamate 226.

It belongs to the anthranilate phosphoribosyltransferase family. In terms of assembly, homodimer. Mg(2+) serves as cofactor.

It carries out the reaction N-(5-phospho-beta-D-ribosyl)anthranilate + diphosphate = 5-phospho-alpha-D-ribose 1-diphosphate + anthranilate. Its pathway is amino-acid biosynthesis; L-tryptophan biosynthesis; L-tryptophan from chorismate: step 2/5. Its function is as follows. Catalyzes the transfer of the phosphoribosyl group of 5-phosphorylribose-1-pyrophosphate (PRPP) to anthranilate to yield N-(5'-phosphoribosyl)-anthranilate (PRA). This Rhizobium rhizogenes (strain K84 / ATCC BAA-868) (Agrobacterium radiobacter) protein is Anthranilate phosphoribosyltransferase.